Consider the following 667-residue polypeptide: Leucine zipper putative tumor suppressor 2 (667 aa).

Residues 1 to 25 (MAIVQTLPVPLEPAPEAATAQQAPA) are compositionally biased toward low complexity. 3 disordered regions span residues 1-132 (MAIV…PVSG), 150-325 (PVLP…DEAL), and 516-541 (QEAE…PPVP). The tract at residues 1-333 (MAIVQTLPVP…ALLHCVLEGK (333 aa)) is required for centrosomal localization. Over residues 172–181 (PSGSQGSLTQ) the composition is skewed to polar residues. Residues 187-198 (ASSSSSSSSSAA) show a composition bias toward low complexity. The segment covering 212–232 (PSGTLSDSGRNSLSSLPTYST) has biased composition (polar residues). Positions 241–282 (SPGGHLPSHGPGRGALPGPARGAPTGPSHSDSGRSSSSKSTG) are enriched in low complexity. Ser248 bears the Phosphoserine mark. Gly residues predominate over residues 283 to 294 (SLGGRLAGGLLG). Ser295 carries the post-translational modification Phosphoserine. Pro residues predominate over residues 310–321 (SPPPPPPPPPPS). Positions 329–647 (VLEGKLRDRE…LELEARELAD (319 aa)) form a coiled coil. A sufficient for interaction with CTNNB1 region spans residues 445-667 (SGEISLLKQQ…CLEEITATEI (223 aa)). The sufficient for interaction with KATNB1 and for inhibition of katanin-mediated microtubule severing stretch occupies residues 448-667 (ISLLKQQLKE…CLEEITATEI (220 aa)). The span at 516–526 (QEAERLREKAG) shows a compositional bias: basic and acidic residues. The residue at position 568 (Ser568) is a Phosphoserine. A Nuclear export signal motif is present at residues 629-638 (LEQELQQLSL).

Belongs to the LZTS2 family. Interacts with KATNB1. Also interacts with CTNNB1, gamma-tubulin and KIF23.

The protein localises to the cytoplasm. The protein resides in the cytoskeleton. It is found in the microtubule organizing center. Its subcellular location is the centrosome. Its function is as follows. Negative regulator of katanin-mediated microtubule severing and release from the centrosome. Required for central spindle formation and the completion of cytokinesis. May negatively regulate axonal outgrowth by preventing the formation of microtubule bundles that are necessary for transport within the elongating axon. Negative regulator of the Wnt signaling pathway. Represses beta-catenin-mediated transcriptional activation by promoting the nuclear exclusion of beta-catenin. In Bos taurus (Bovine), this protein is Leucine zipper putative tumor suppressor 2.